Here is a 311-residue protein sequence, read N- to C-terminus: 4-diphosphocytidyl-2-C-methyl-D-erythritol kinase (311 aa).

The active site involves K16. 100 to 110 contributes to the ATP binding site; it reads PIGAGLAGGSS. D142 is an active-site residue.

The protein belongs to the GHMP kinase family. IspE subfamily.

The catalysed reaction is 4-CDP-2-C-methyl-D-erythritol + ATP = 4-CDP-2-C-methyl-D-erythritol 2-phosphate + ADP + H(+). It functions in the pathway isoprenoid biosynthesis; isopentenyl diphosphate biosynthesis via DXP pathway; isopentenyl diphosphate from 1-deoxy-D-xylulose 5-phosphate: step 3/6. In terms of biological role, catalyzes the phosphorylation of the position 2 hydroxy group of 4-diphosphocytidyl-2C-methyl-D-erythritol. The polypeptide is 4-diphosphocytidyl-2-C-methyl-D-erythritol kinase (Prochlorococcus marinus (strain MIT 9301)).